Consider the following 95-residue polypeptide: Protein TusB (95 aa).

This sequence belongs to the DsrH/TusB family. Heterohexamer, formed by a dimer of trimers. The hexameric TusBCD complex contains 2 copies each of TusB, TusC and TusD. The TusBCD complex interacts with TusE.

It is found in the cytoplasm. Part of a sulfur-relay system required for 2-thiolation of 5-methylaminomethyl-2-thiouridine (mnm(5)s(2)U) at tRNA wobble positions. The polypeptide is Protein TusB (Pectobacterium parmentieri).